Here is a 375-residue protein sequence, read N- to C-terminus: Actin, cytoplasmic (375 aa).

The protein belongs to the actin family.

The protein resides in the cytoplasm. The protein localises to the cytoskeleton. It carries out the reaction ATP + H2O = ADP + phosphate + H(+). Actins are highly conserved proteins that are involved in various types of cell motility and are ubiquitously expressed in all eukaryotic cells. The polypeptide is Actin, cytoplasmic (Sterkiella nova (Ciliate)).